The sequence spans 312 residues: uncharacterized protein (312 aa).

The protein belongs to the mimivirus R69 family.

This is an uncharacterized protein from Acanthamoeba polyphaga mimivirus (APMV).